The primary structure comprises 287 residues: Energy-coupling factor transporter ATP-binding protein EcfA (287 aa).

Residues 19–252 form the ABC transporter domain; it reads FEIQNVSFSY…EEFLASSALD (234 aa). 52–59 is a binding site for ATP; that stretch reads GHNGSGKS.

It belongs to the ABC transporter superfamily. Energy-coupling factor EcfA family. As to quaternary structure, forms a stable energy-coupling factor (ECF) transporter complex composed of 2 membrane-embedded substrate-binding proteins (S component), 2 ATP-binding proteins (A component) and 2 transmembrane proteins (T component).

It is found in the cell membrane. Its function is as follows. ATP-binding (A) component of a common energy-coupling factor (ECF) ABC-transporter complex. Unlike classic ABC transporters this ECF transporter provides the energy necessary to transport a number of different substrates. The protein is Energy-coupling factor transporter ATP-binding protein EcfA of Malacoplasma penetrans (strain HF-2) (Mycoplasma penetrans).